A 241-amino-acid chain; its full sequence is Orotidine 5'-phosphate decarboxylase (241 aa).

Residues Asp-15, Lys-37, 64-73, Thr-126, Arg-187, Gln-196, Gly-216, and Arg-217 each bind substrate; that span reads DLKYHDIPNT. Lys-66 acts as the Proton donor in catalysis.

It belongs to the OMP decarboxylase family. Type 1 subfamily. In terms of assembly, homodimer.

It catalyses the reaction orotidine 5'-phosphate + H(+) = UMP + CO2. It participates in pyrimidine metabolism; UMP biosynthesis via de novo pathway; UMP from orotate: step 2/2. Functionally, catalyzes the decarboxylation of orotidine 5'-monophosphate (OMP) to uridine 5'-monophosphate (UMP). In Trichlorobacter lovleyi (strain ATCC BAA-1151 / DSM 17278 / SZ) (Geobacter lovleyi), this protein is Orotidine 5'-phosphate decarboxylase.